The chain runs to 225 residues: Putative 5'-nucleotidase alr3139 (225 aa).

The a divalent metal cation site is built by D8, D9, S37, and N88.

The protein belongs to the SurE nucleotidase family. Requires a divalent metal cation as cofactor.

Its subcellular location is the cytoplasm. The enzyme catalyses a ribonucleoside 5'-phosphate + H2O = a ribonucleoside + phosphate. Functionally, nucleotidase that shows phosphatase activity on nucleoside 5'-monophosphates. The sequence is that of Putative 5'-nucleotidase alr3139 from Synechocystis sp. (strain ATCC 27184 / PCC 6803 / Kazusa).